Consider the following 369-residue polypeptide: MKYKRIVFKVGTSSLTNEDGSLSRSKVKDITQQLAMLHEAGHELILVSSGAIAAGFGALGFKKRPTKIADKQASAAVGQGLLLEEYTTNLLLRQIVSAQILLTQDDFVDKRRYKNAHQALSVLLNRGAIPIINENDSVVIDELKVGDNDTLSAQVAAMVQADLLVFLTDVDGLYTGNPNSDPRAKRLERIETINREIIDMAGGAGSSNGTGGMLTKIKAATIATESGVPVYICSSLKSDSMIEAAEETEDGSYFVAQEKGLRTQKQWLAFYAQSQGSIWVDKGAAEALSQYGKSLLLSGIVEAEGVFSYGDIVTVFDKESGKSLGKGRVQFGASALEDMLRSQKAKGVLIYRDDWISITPEIQLLFTEF.

Residue lysine 9 coordinates ATP. Serine 49, aspartate 136, and asparagine 148 together coordinate substrate. Residues 168 to 169 and 210 to 216 each bind ATP; these read TD and TGGMLTK. The PUA domain maps to 275 to 355; the sequence is QGSIWVDKGA…KGVLIYRDDW (81 aa).

Belongs to the glutamate 5-kinase family.

The protein localises to the cytoplasm. The catalysed reaction is L-glutamate + ATP = L-glutamyl 5-phosphate + ADP. Its pathway is amino-acid biosynthesis; L-proline biosynthesis; L-glutamate 5-semialdehyde from L-glutamate: step 1/2. In terms of biological role, catalyzes the transfer of a phosphate group to glutamate to form L-glutamate 5-phosphate. This chain is Glutamate 5-kinase, found in Streptococcus pneumoniae serotype 4 (strain ATCC BAA-334 / TIGR4).